Here is a 327-residue protein sequence, read N- to C-terminus: MDLYPEEKTQSKQSHNSENNMQIFKSENSDGFSSDLMISNDQLKNISKTQLTLEKEKIFKMPNVLSQVMKKAFSRKNEILYCVSTKELSVDIHDATGKVYLPLITKEEINKRLSSLKPEVRKTMSMVHLGAVKILLKAQFRNGIDTPIKIALIDDRINSRRDCLLGAAKGNLAYGKFMFTVYPKFGISLNTQRLNQTLSLIHDFENKNLMNKGDKVMTITYIVGYALTNSHHSIDYQSNATIELEDVFQEIGNVQQCDFCTIQNDECNWAIDIAQNKALLGAKTQSQIGNSLQIGNSASSSNTENELARVSQNIDLLKNKLKEICGE.

Residues 297–327 are a coiled coil; that stretch reads SASSSNTENELARVSQNIDLLKNKLKEICGE.

It belongs to the caulimoviridae movement protein family. In terms of assembly, homotrimer, through the coiled-coil domain. Interacts with VAP. May interact (via N-terminus) with host prenylated Rab acceptor protein 1D (PRA1D).

It localises to the host cell junction. The protein localises to the host plasmodesma. Its function is as follows. Transports viral genome to neighboring plant cells directly through plasmosdesmata, without any budding. The movement protein allows efficient cell to cell propagation, by bypassing the host cell wall barrier. Acts by forming tubules structures that increase the size exclusion limit (SEL) of plasmodesmata, thereby allowing viral ribonucleocapsids to spread directly to neighboring cells. This chain is Movement protein, found in Arabidopsis thaliana (Mouse-ear cress).